The sequence spans 403 residues: G-protein coupled receptor family C group 5 member B (403 aa).

The signal sequence occupies residues 1–28 (MFVASERKMRAHQVLTFLLLFVITSVAS). Topologically, residues 29–56 (ENASTSRGCGLDLLPQYVSLCDLDAIWG) are extracellular. An N-linked (GlcNAc...) asparagine glycan is attached at Asn-30. A helical membrane pass occupies residues 57–77 (IVVEAVAGAGALITLLLMLIL). Over 78–94 (LVRLPFIKEKEKKSPVG) the chain is Cytoplasmic. Residues 95–115 (LHFLFLLGTLGLFGLTFAFII) traverse the membrane as a helical segment. The Extracellular segment spans residues 116–126 (QEDETICSVRR). The chain crosses the membrane as a helical span at residues 127–147 (FLWGVLFALCFSCLLSQAWRV). Residues 148–162 (RRLVRHGTGPAGWQL) are Cytoplasmic-facing. Residues 163-183 (VGLALCLMLVQVIIAVEWLVL) traverse the membrane as a helical segment. At 184–199 (TVLRDTRPACAYEPMD) the chain is on the extracellular side. A helical transmembrane segment spans residues 200-220 (FVMALIYDMVLLVVTLGLALF). Over 221–234 (TLCGKFKRWKLNGA) the chain is Cytoplasmic. The helical transmembrane segment at 235–255 (FLLITAFLSVLIWVAWMTMYL) threads the bilayer. The Extracellular segment spans residues 256–271 (FGNVKLQQGDAWNDPT). The chain crosses the membrane as a helical span at residues 272-292 (LAITLAASGWVFVIFHAIPEI). The Cytoplasmic portion of the chain corresponds to 293 to 403 (HCTLLPALQE…PPSHTGRHLW (111 aa)). A disordered region spans residues 349–371 (GFPNGSLGKRPSGSLGKRPSAPF). Ser-354 bears the Phosphoserine mark.

It belongs to the G-protein coupled receptor 3 family. Expression is high in kidney, pancreas, and testis, medium in brain, heart, prostate, small intestine, and spleen, low in liver, placenta, skeletal muscle, colon, ovary, and thymus, and not detectable in lung and peripheral leukocyte. According to PubMed:10945465, highly expressed in most brain areas examined, with the highest levels observed in corpus callosum, caudate nucleus, putamen, substantia nigra, thalamus, hippocampus, and spinal cord as well as in dorsal root ganglia (DRG). Expressed in glia limitans, ependymal cells, astrocyte cell bodies, the perivascular region in astrocyte endfeet, but not in neurons. In the periphery, expression levels are relatively low, compared to the CNS, with the strongest expression detected in pancreas, testis, uterus, and stomach.

Its subcellular location is the cell membrane. It localises to the cytoplasmic vesicle membrane. G-protein coupled receptor involved in the regulation of cell volume. In Homo sapiens (Human), this protein is G-protein coupled receptor family C group 5 member B (GPRC5B).